The sequence spans 357 residues: MTAATAQRIGQGSRSSKEDRDRRLVRYWLYAVFVVLIAIVMVGGATRMTGSGLSITEWKPIHGVIPPLNHAEWLEEFDKYRQIPQYQQINKGMSLEAFQSIFWWEWAHRMLARFVGFLVAVPLAFFWVTGRLKGGLKYRMLGLLALGGLQGAIGWWMVASGLSELTSVSQYRLAIHLTTACIIITAVFYIARGLVTYSERPAERSIQRFAGWIVFAVLVQIYLGGLVAGLHAGLTYNTWPLMDGAVIPSDLFIQSPWWRNLFENPKTVQFVHRMFAYTVLVLTVLHSLQVWKQVPGTTHARRTIVLVGLVLIQAVIGIATLLMSVPLHLGLTHQFFALIVLAFAVAHWRATKGAYEG.

Helical transmembrane passes span 24 to 44 (LVRYWLYAVFVVLIAIVMVGG), 110 to 130 (MLARFVGFLVAVPLAFFWVTG), 140 to 160 (MLGLLALGGLQGAIGWWMVAS), 175 to 195 (IHLTTACIIITAVFYIARGLV), and 209 to 229 (FAGWIVFAVLVQIYLGGLVAG). H272 contacts heme. Helical transmembrane passes span 274–294 (MFAYTVLVLTVLHSLQVWKQV), 303–323 (TIVLVGLVLIQAVIGIATLLM), and 325–345 (VPLHLGLTHQFFALIVLAFAV). H333 provides a ligand contact to heme.

The protein belongs to the COX15/CtaA family. Type 2 subfamily. In terms of assembly, interacts with CtaB. Requires heme b as cofactor.

Its subcellular location is the cell membrane. It carries out the reaction Fe(II)-heme o + 2 A + H2O = Fe(II)-heme a + 2 AH2. The protein operates within porphyrin-containing compound metabolism; heme A biosynthesis; heme A from heme O: step 1/1. Its function is as follows. Catalyzes the conversion of heme O to heme A by two successive hydroxylations of the methyl group at C8. The first hydroxylation forms heme I, the second hydroxylation results in an unstable dihydroxymethyl group, which spontaneously dehydrates, resulting in the formyl group of heme A. The sequence is that of Heme A synthase from Brucella anthropi (strain ATCC 49188 / DSM 6882 / CCUG 24695 / JCM 21032 / LMG 3331 / NBRC 15819 / NCTC 12168 / Alc 37) (Ochrobactrum anthropi).